The following is a 655-amino-acid chain: Polycyclic ketone monooxygenase (655 aa).

FAD contacts are provided by Gly-89, Asp-113, Ala-114, Thr-121, Trp-124, Cys-132, Asp-133, Tyr-139, and Val-183. 5 residues coordinate NADPH: Thr-277, Thr-280, Thr-301, Lys-425, and Val-452. Cys-424 and Cys-596 are oxidised to a cystine. Residues Thr-492 and Asn-541 each contribute to the FAD site. Residue Tyr-600 participates in NADPH binding.

The protein belongs to the FAD-binding monooxygenase family. FAD serves as cofactor.

Its function is as follows. Polycyclic ketone monooxygenase (PockeMO) that displays excellent enantioselectivity, acts on various ketones, and is particularly active on polycyclic molecules. Breaks C-C bonds through the insertion of a single oxygen atom adjacent to a carbonyl moiety, yielding esters or lactones from ketones. PockeMO is able to convert linear ketones (including cyclohexane and to a lesser extend 4-octanone), cyclic ketones (including cyclohexanone and cyclooctanone), bicyclic ketones and polycyclic ketones (steroids). Performs oxidation of the keto functionalities at both the A and D rings of steroids. Particularly, oxidizes the A ring of stanolone or pregnenolone. Selectively oxidizes the D ring of androstenedione or androstadienedione, steroids with keto groups in both the A and D rings, to yield the pharmaceutically relevant testo(lo)lactone. This is Polycyclic ketone monooxygenase from Thermothelomyces thermophilus (strain ATCC 42464 / BCRC 31852 / DSM 1799) (Sporotrichum thermophile).